Reading from the N-terminus, the 732-residue chain is MADNKKSPETGGITMQIPGKGRTNRDWWPDQLNLKILSQNSPLSNPLGQKFNYRVEFSKLDLAAVKQDLRDLMTSSQDWWPADFGHYGPLFIRMAWHSAGTYRTFDGRGGASGGEQRFPPLNSWPDNVNLDKARRLLWPIKQKYGQKISWADLMILAGNVALESMGFKTFGFGGGREDVWEPQEDTYWGSEDTWLGDKRYSGDRELEKPLAAVQMGLIYVNPEGPDGNPDPVAAARDIREVFARMAMNDEETVALIAGGHAFGKTHGAGPASHLGPEPEAAGIEEQGLGWKNSFGTGKGNDTITSGIEITWTPTPTKWSNNFFRVLFSYEWELTKSPAGAYQWKPKGEAGAGTVPDPHDPKKRHAPGMLTTDLALRFDPIYEKISRRFYENPELFADAFARAWFKLTHRDMGPKTRYLGPEVPDEDLIWQDPIPAINHPLIDDQDIALLKSRILASGLSISRLVYTAWAAASTFRGSDKRGGANGARIRLDPQKNWEVNEPEELANVLKILEGIQHEFNQNAPGGKRVSLADLIVLGGCAGIEQAAKNAGYSVTVPFTPGRMDAVQEQTDAASFAVLEPMADGFRNYAKRHLPMKPEAMLIDKAQLLMLTAPEMTVLIGGMRVLNTNFGQTKHGVFTDKPETLTNDYFVHLLDMGTEWTPVSETEDLYEGRDRRTGEIRWTGTRVDLIFGSNSQLRALAEVYACSDGKDKFIQDFVAAWAKVMNLDRFDRIQ.

The interval M1–D26 is disordered. A cross-link (tryptophyl-tyrosyl-methioninium (Trp-Tyr) (with M-245)) is located at residues W96–Y219. Catalysis depends on H97, which acts as the Proton acceptor. The segment at residues Y219–M245 is a cross-link (tryptophyl-tyrosyl-methioninium (Tyr-Met) (with W-96)). Position 260 (H260) interacts with heme b. Residues K344 to A365 form a disordered region.

This sequence belongs to the peroxidase family. Peroxidase/catalase subfamily. As to quaternary structure, homodimer or homotetramer. It depends on heme b as a cofactor. Formation of the three residue Trp-Tyr-Met cross-link is important for the catalase, but not the peroxidase activity of the enzyme.

The enzyme catalyses H2O2 + AH2 = A + 2 H2O. It carries out the reaction 2 H2O2 = O2 + 2 H2O. Its function is as follows. Bifunctional enzyme with both catalase and broad-spectrum peroxidase activity. The polypeptide is Catalase-peroxidase (Methanospirillum hungatei JF-1 (strain ATCC 27890 / DSM 864 / NBRC 100397 / JF-1)).